A 463-amino-acid polypeptide reads, in one-letter code: GTPase Der (463 aa).

2 consecutive EngA-type G domains span residues 2–164 (KKII…PKSK) and 198–369 (IKIG…KNYT). GTP contacts are provided by residues 8–15 (GRPNVGKS), 55–59 (DSGGL), 116–119 (NKVD), 204–211 (GRVNVGKS), 251–255 (DTAGI), and 315–318 (NKWD). In terms of domain architecture, KH-like spans 370–454 (QKMKTSRLNE…PVILIPKNRS (85 aa)).

This sequence belongs to the TRAFAC class TrmE-Era-EngA-EngB-Septin-like GTPase superfamily. EngA (Der) GTPase family. In terms of assembly, associates with the 50S ribosomal subunit.

GTPase that plays an essential role in the late steps of ribosome biogenesis. This Campylobacter fetus subsp. fetus (strain 82-40) protein is GTPase Der.